The sequence spans 527 residues: Pentatricopeptide repeat-containing protein At5g41170, mitochondrial (527 aa).

A mitochondrion-targeting transit peptide spans 1–35; it reads MAMRFFQLHRNRLVKGNSGKALSFSRLLDLSFWVR. PPR repeat units follow at residues 36–70, 71–105, 106–140, 141–175, 176–210, 211–245, 246–280, 281–315, 316–350, 351–385, 386–420, 424–458, 459–493, and 494–527; these read AFCNYREILRNGLHSLQFNEALDLFTHMVESRPLP, SIIDFTKLLNVIAKMKKFDVVINLCDHLQIMGVSH, DLYTCNLLMNCFCQSSQPYLASSFLGKMMKLGFEP, DIVTFTSLINGFCLGNRMEEAMSMVNQMVEMGIKP, DVVMYTTIIDSLCKNGHVNYALSLFDQMENYGIRP, DVVMYTSLVNGLCNSGRWRDADSLLRGMTKRKIKP, DVITFNALIDAFVKEGKFLDAEELYNEMIRMSIAP, NIFTYTSLINGFCMEGCVDEARQMFYLMETKGCFP, DVVAYTSLINGFCKCKKVDDAMKIFYEMSQKGLTG, NTITYTTLIQGFGQVGKPNVAQEVFSHMVSRGVPP, NIRTYNVLLHCLCYNGKVKKALMIFEDMQKREMDG, NIWTYNVLLHGLCYNGKLEKALMVFEDMRKREMDI, GIITYTIIIQGMCKAGKVKNAVNLFCSLPSKGVKP, and NVVTYTTMISGLFREGLKHEAHVLFRKMKEDGVS.

Belongs to the PPR family. P subfamily.

It localises to the mitochondrion. This chain is Pentatricopeptide repeat-containing protein At5g41170, mitochondrial, found in Arabidopsis thaliana (Mouse-ear cress).